We begin with the raw amino-acid sequence, 444 residues long: S-locus-specific glycoprotein BS29-1 (444 aa).

The signal sequence occupies residues 1 to 28 (MRGVIPNYHHSYTLLFFVILVLFPHVFS). Positions 31 to 159 (TLSPNEALTI…KTTALDRFMW (129 aa)) constitute a Bulb-type lectin domain. Residues asparagine 43, asparagine 125, asparagine 180, asparagine 243, and asparagine 396 are each glycosylated (N-linked (GlcNAc...) asparagine). The PAN domain occupies 356–437 (CGEGDGFLRM…GGQDLYLKVA (82 aa)). 2 disulfide bridges follow: cysteine 387/cysteine 412 and cysteine 395/cysteine 397.

In terms of tissue distribution, stigma.

Functionally, involved in sporophytic self-incompatibility system (the inability of flowering plants to achieve self-fertilization). This is S-locus-specific glycoprotein BS29-1 (SLSG) from Brassica oleracea var. alboglabra (Chinese kale).